A 217-amino-acid chain; its full sequence is Probable GTP-binding protein EngB (217 aa).

The EngB-type G domain occupies 40–217 (DVPEIAFAGR…RAAVLQDAMG (178 aa)). Residues 48-55 (GRSNVGKS), 75-79 (GRTQE), 95-98 (DMPG), 162-165 (TKAD), and 196-198 (TSS) contribute to the GTP site. The Mg(2+) site is built by S55 and T77.

The protein belongs to the TRAFAC class TrmE-Era-EngA-EngB-Septin-like GTPase superfamily. EngB GTPase family. It depends on Mg(2+) as a cofactor.

In terms of biological role, necessary for normal cell division and for the maintenance of normal septation. The chain is Probable GTP-binding protein EngB from Novosphingobium aromaticivorans (strain ATCC 700278 / DSM 12444 / CCUG 56034 / CIP 105152 / NBRC 16084 / F199).